A 462-amino-acid polypeptide reads, in one-letter code: Anthranilate synthase component 1 (462 aa).

L-tryptophan-binding positions include serine 46 and 243-245 (PHM). Position 278 to 279 (278 to 279 (GT)) interacts with chorismate. Glutamate 305 is a Mg(2+) binding site. Residues tyrosine 394, arginine 414, 428–430 (SGG), and glycine 430 contribute to the chorismate site. Glutamate 444 contributes to the Mg(2+) binding site.

Belongs to the anthranilate synthase component I family. In terms of assembly, heterotetramer consisting of two non-identical subunits: a beta subunit (TrpG) and a large alpha subunit (TrpE). Requires Mg(2+) as cofactor.

The enzyme catalyses chorismate + L-glutamine = anthranilate + pyruvate + L-glutamate + H(+). Its pathway is amino-acid biosynthesis; L-tryptophan biosynthesis; L-tryptophan from chorismate: step 1/5. Feedback inhibited by tryptophan. Its function is as follows. Part of a heterotetrameric complex that catalyzes the two-step biosynthesis of anthranilate, an intermediate in the biosynthesis of L-tryptophan. In the first step, the glutamine-binding beta subunit (TrpG) of anthranilate synthase (AS) provides the glutamine amidotransferase activity which generates ammonia as a substrate that, along with chorismate, is used in the second step, catalyzed by the large alpha subunit of AS (TrpE) to produce anthranilate. In the absence of TrpG, TrpE can synthesize anthranilate directly from chorismate and high concentrations of ammonia. The sequence is that of Anthranilate synthase component 1 (trpE) from Leptospira biflexa.